The following is a 742-amino-acid chain: mRNA export factor ICP27 homolog (742 aa).

Residues 1–11 (MELHSRGRHDA) are compositionally biased toward basic and acidic residues. A disordered region spans residues 1 to 202 (MELHSRGRHD…NHHGSSAGPQ (202 aa)). Over residues 72–85 (SHHHRPCVPARRPR) the composition is skewed to basic residues. Positions 153–171 (KSYDNDDGEPHHHGGDSTH) are enriched in basic and acidic residues. Polar residues predominate over residues 179–202 (CPTTFGSSHPSSANNHHGSSAGPQ). Zn(2+) is bound by residues C387, H494, C496, and C501. The CHC2-type zinc-finger motif lies at 387 to 501 (CILDHQDGWG…QCHECQNEMC (115 aa)). The interval 540 to 742 (ASNHATAGGQ…MLCYSDDMDD (203 aa)) is disordered. Residues 578 to 587 (YDKKDREGSH) show a composition bias toward basic and acidic residues. The segment covering 614 to 626 (GELEEDEDSDDAS) has biased composition (acidic residues). Residues 692-703 (QSANGNHSTTAT) are compositionally biased toward polar residues.

The protein belongs to the HHV-1 ICP27 protein family. As to quaternary structure, self-associates and forms high-molecular-mass complexes. Interacts with host DDX39A and DDX39B; these interactions are required for UL69 function in mRNA export. Interacts with host SUPT6H, EIF4A1 and PABPC1. Phosphorylated by UL97 and host CDK1, CDK7 and CD9. Phosphorylation by CDKs impacts on UL69 nuclear localization and activity.

It localises to the virion tegument. Its subcellular location is the virion. The protein localises to the host nucleus. The protein resides in the host cytoplasm. In terms of biological role, immediate early (EI) protein that plays many roles during productive infection including regulation of host cell cycle progression, regulation of viral gene expression or nuclear export of intronless viral RNAs. Acts as a transcriptional transactivator via interaction with the cellular transcription elongation factor SUPT6H and as a nuclear RNA export factor via interaction with UAP56, a component of the cellular mRNA export machinery. In Human cytomegalovirus (strain Merlin) (HHV-5), this protein is mRNA export factor ICP27 homolog.